The following is an 885-amino-acid chain: MQERYQPNSVEAAAQQTWQARDAYLVHEHAKNPDGSEKPKFYACSMLPYPSGKLHMGHVRNYTINDMMARQLRMRGYNVLMPMGWDAFGMPAENAAIKSKVPPAKWTYDNIAYMKKQMKAMGLAIDWSREMCACDPKYYKWNQWLFLKMLEKGIAYRKTQVVNWDPVDQTVLANEQVIDGRGWRSGAPVEKREIPGYYLRITDYAEELLDQVSTNLPGWPERVRLMQENWIGKSEGLRFAFPHRIAGADGKLIQDGKLYVFTTRADTIMGVTFCAVAPEHPLATHAAQSNPALAAFVEQCKLGGTTEAEMATREKEGMPTGLTVTHPLTGAEIDVWVGNYVLMTYGDGAVMGVPAHDERDFAFARKYGLPIRQVVALEGKTYSTDAWQEWYGDKQAGRTVNSGKYDGLAYQAAVDTIAADLAAQGLGEKQTTWRLRDWGISRQRYWGTPIPIIHCADCGPVPVPEQDLPVVLPDDLIPDGSGNPLAKNEAFLSCSCPRCGKPARRETDTMDTFVDSSWYFMRYTSPDNDQAMVDARNDYWMPMDQYIGGIEHAVLHLLYARFWTKVMRDLGLLNFDEPFTKLLCQGMVLNHIYSRKTPQGGIEYFWPEEVDNVYDAKGAIVGAKLQRDGSEVNYGGVGTMSKSKNNGVDPQSLIDTLGADTARLFVMFASPPEQTLEWSDSGVEGANRFLRRLWALGYAQREAVGRGLATGADWAQAPAPVKELRREVYGLLKQADYDYQRIQYNTVVSACMKMLNAIDDAPLPEGPAADAARAETLGLLLRVLYPVVPHITWHLWQDLGYAEHLGDLLDAPWPHVDEAALVADEIELMLQVNGKLRGSIRVAAKAPKEDIERIAAAQEEVARFLEGRPPKRVIVVPGKLVNVVG.

The 'HIGH' region motif lies at 48-58; sequence PYPSGKLHMGH. Residues 639–643 carry the 'KMSKS' region motif; sequence TMSKS. K642 contributes to the ATP binding site.

It belongs to the class-I aminoacyl-tRNA synthetase family.

Its subcellular location is the cytoplasm. It carries out the reaction tRNA(Leu) + L-leucine + ATP = L-leucyl-tRNA(Leu) + AMP + diphosphate. This Bordetella bronchiseptica (strain ATCC BAA-588 / NCTC 13252 / RB50) (Alcaligenes bronchisepticus) protein is Leucine--tRNA ligase.